Consider the following 198-residue polypeptide: Secreted RxLR effector protein PITG_22926 (198 aa).

Positions 1 to 20 (MLRSFLLIVATVSLFGQCKP) are cleaved as a signal peptide. The short motif at 43–52 (RFLRTNDEER) is the RxLR-dEER element.

This sequence belongs to the RxLR effector family. Interacts with host MAP3Kbeta2 in the nucleoplasm.

The protein resides in the secreted. It localises to the host nucleus. The protein localises to the host nucleolus. In terms of biological role, secreted effector that promotes P.infestans colonization of plant host. Specifically suppresses Avr4/Cf4- and AvrPto/Pto-triggered cell death. Targets the potato MAP3Kbeta2 kinase, a positive regulator of cell death associated with plant immunity, and perturbs signaling pathways triggered by MAP3Kbeta2. This Phytophthora infestans (strain T30-4) (Potato late blight agent) protein is Secreted RxLR effector protein PITG_22926.